Here is a 174-residue protein sequence, read N- to C-terminus: Inactive protein RESTRICTED TEV MOVEMENT 1 (174 aa).

Residues 1–152 form the Jacalin-type lectin domain; that stretch reads MKIGPVGKHD…LQYIGVYLRP (152 aa).

The protein belongs to the jacalin lectin family. As to quaternary structure, self-interacts. Interacts with RTM3.

The protein localises to the cytoplasm. Unable to mediate restriction of long-distance movement of the pathogenic tobacco etch virus (TEV) without causing a hypersensitive response or inducing systemic acquired resistance. This is Inactive protein RESTRICTED TEV MOVEMENT 1 (RTM1) from Arabidopsis thaliana (Mouse-ear cress).